Here is a 773-residue protein sequence, read N- to C-terminus: Carnitine O-palmitoyltransferase 1, liver isoform (773 aa).

Residue alanine 2 is modified to N-acetylalanine. The Cytoplasmic segment spans residues 2-47 (AEAHQAVAFQFTVTPDGIDLRLSHEALRQIYLSGLHSWKKKFIRFK). Residues 48–73 (NGIITGVYPASPSSWLIVVVGVMTTM) traverse the membrane as a helical segment. Topologically, residues 74 to 102 (YAKIDPSLGIIAKINRTLETANCMSSQTK) are mitochondrial intermembrane. The helical transmembrane segment at 103–122 (NVVSGVLFGTGLWVALIVTM) threads the bilayer. At 123–773 (RYSLKVLLSY…LFGLSSNSKK (651 aa)) the chain is on the cytoplasmic side. At tyrosine 282 the chain carries 3'-nitrotyrosine. The Proton acceptor role is filled by histidine 473. Position 555 to 567 (555 to 567 (GKGIIKKCRTSPD)) interacts with CoA. Threonine 588 is modified (phosphothreonine). Tyrosine 589 carries the post-translational modification 3'-nitrotyrosine. 2 residues coordinate (R)-carnitine: tyrosine 589 and threonine 602. Threonine 604 is subject to Phosphothreonine. Residues serine 741 and serine 747 each carry the phosphoserine modification.

It belongs to the carnitine/choline acetyltransferase family. In terms of assembly, homohexamer and homotrimer. Identified in a complex that contains at least CPT1A, ACSL1 and VDAC1. Also identified in complexes with ACSL1 and VDAC2 and VDAC3. Interacts with ZDHHC4. Strong expression in kidney and heart, and lower in liver and skeletal muscle.

Its subcellular location is the mitochondrion outer membrane. The catalysed reaction is (R)-carnitine + hexadecanoyl-CoA = O-hexadecanoyl-(R)-carnitine + CoA. It catalyses the reaction succinyl-CoA + L-lysyl-[protein] = N(6)-succinyl-L-lysyl-[protein] + CoA + H(+). Its pathway is lipid metabolism; fatty acid beta-oxidation. Its activity is regulated as follows. Inhibited by malonyl-CoA. In terms of biological role, catalyzes the transfer of the acyl group of long-chain fatty acid-CoA conjugates onto carnitine, an essential step for the mitochondrial uptake of long-chain fatty acids and their subsequent beta-oxidation in the mitochondrion. Also possesses a lysine succinyltransferase activity that can regulate enzymatic activity of substrate proteins such as ENO1 and metabolism independent of its classical carnitine O-palmitoyltransferase activity. Plays an important role in hepatic triglyceride metabolism. Also plays a role in inducible regulatory T-cell (iTreg) differentiation once activated by butyryl-CoA that antagonizes malonyl-CoA-mediated CPT1A repression. Sustains the IFN-I response by recruiting ZDHCC4 to palmitoylate MAVS at the mitochondria leading to MAVS stabilization and activation. Promotes ROS-induced oxidative stress in liver injury via modulation of NFE2L2 and NLRP3-mediated signaling pathways. This chain is Carnitine O-palmitoyltransferase 1, liver isoform, found in Homo sapiens (Human).